The sequence spans 400 residues: Elongation factor Tu (400 aa).

Positions 10–209 (KPHVNIGTIG…EVDKYIPTPE (200 aa)) constitute a tr-type G domain. Residues 19–26 (GHVDHGKT) are G1. 19–26 (GHVDHGKT) contacts GTP. T26 provides a ligand contact to Mg(2+). A G2 region spans residues 60–64 (GITIN). The G3 stretch occupies residues 81-84 (DCPG). Residues 81–85 (DCPGH) and 136–139 (NKAD) each bind GTP. The segment at 136–139 (NKAD) is G4. Positions 174-176 (SGL) are G5.

It belongs to the TRAFAC class translation factor GTPase superfamily. Classic translation factor GTPase family. EF-Tu/EF-1A subfamily. In terms of assembly, monomer.

The protein resides in the cytoplasm. It carries out the reaction GTP + H2O = GDP + phosphate + H(+). GTP hydrolase that promotes the GTP-dependent binding of aminoacyl-tRNA to the A-site of ribosomes during protein biosynthesis. The sequence is that of Elongation factor Tu from Heliobacterium modesticaldum (strain ATCC 51547 / Ice1).